The sequence spans 74 residues: Homeobox protein H40 (74 aa).

Positions 8–67 form a DNA-binding region, homeobox; that stretch reads ARRARTAFTYEQLVALENKFKTTRYLSVCERLNLALSLSLTETQVKIWFQNRRTKWKKQN.

The protein localises to the nucleus. In Apis mellifera (Honeybee), this protein is Homeobox protein H40.